Here is a 144-residue protein sequence, read N- to C-terminus: Histone H3.1 (144 aa).

A disordered region spans residues 1-45 (MARTKQSARKTTGGKAPRKQLSAKSARKGVSPASSAGAKKSRYRP). Lysine 5 is subject to N6,N6,N6-trimethyllysine; alternate. At lysine 5 the chain carries N6,N6-dimethyllysine; alternate. 2 positions are modified to N6-methyllysine; alternate: lysine 5 and lysine 10. Residues lysine 10, lysine 15, lysine 19, lysine 24, lysine 28, and lysine 39 each carry the N6-acetyllysine; alternate modification. Lysine 15 is modified (N6,N6-dimethyllysine; alternate). N6-methyllysine; alternate occurs at positions 19, 24, 28, and 39. N6,N6,N6-trimethyllysine; alternate occurs at positions 28 and 39. Residues lysine 28 and lysine 39 each carry the N6,N6-dimethyllysine; alternate modification. The residue at position 58 (lysine 58) is an N6-acetyllysine.

The protein belongs to the histone H3 family. In terms of assembly, the nucleosome is a histone octamer containing two molecules each of H2A, H2B, H3 and H4 assembled in one H3-H4 heterotetramer and two H2A-H2B heterodimers. The octamer wraps approximately 147 bp of DNA. Post-translationally, mono-, di- and trimethylated to form H3K4me1/2/3. H3K4me activates gene expression by regulating transcription elongation and plays a role in telomere length maintenance. H3K4me enrichment correlates with transcription levels, and occurs in a 5' to 3' gradient with H3K4me3 enrichment at the 5'-end of genes, shifting to H3K4me2 and then H3K4me1. H3K36me represses gene expression. In terms of processing, acetylation of histone H3 leads to transcriptional activation.

The protein resides in the nucleus. It localises to the chromosome. Core component of nucleosome. Nucleosomes wrap and compact DNA into chromatin, limiting DNA accessibility to the cellular machineries which require DNA as a template. Histones thereby play a central role in transcription regulation, DNA repair, DNA replication and chromosomal stability. DNA accessibility is regulated via a complex set of post-translational modifications of histones, also called histone code, and nucleosome remodeling. The sequence is that of Histone H3.1 (HHT1) from Encephalitozoon cuniculi (strain GB-M1) (Microsporidian parasite).